The primary structure comprises 1171 residues: Putative tricorn protease homolog 2 (1171 aa).

The interval 432 to 498 is disordered; the sequence is AGYPPDAGDE…GSPGTPATAG (67 aa). 2 stretches are compositionally biased toward low complexity: residues 444–456 and 466–498; these read AGTA…APDA and IAAG…ATAG. The Charge relay system role is filled by H827. The tract at residues 842–941 is PDZ-like; sequence YQRWQGLLGA…RVAVVPLVDE (100 aa). Position 1002–1004 (1002–1004) interacts with substrate; that stretch reads AGG. Catalysis depends on S1051, which acts as the Nucleophile. 1079–1081 is a binding site for substrate; the sequence is GMT. Residue E1109 is the Charge relay system of the active site. The disordered stretch occupies residues 1149–1171; sequence PPATPPGYEAVPDRSRPPLPPRE. Residues 1159–1171 are compositionally biased toward basic and acidic residues; that stretch reads VPDRSRPPLPPRE.

The protein belongs to the peptidase S41B family.

It is found in the cytoplasm. Degrades oligopeptides in a sequential manner. This Streptomyces coelicolor (strain ATCC BAA-471 / A3(2) / M145) protein is Putative tricorn protease homolog 2 (tri2).